The primary structure comprises 445 residues: tRNA modification GTPase MnmE (445 aa).

3 residues coordinate (6S)-5-formyl-5,6,7,8-tetrahydrofolate: Arg20, Glu79, and Lys119. Residues 215–371 enclose the TrmE-type G domain; the sequence is GLKLAIIGPP…ILKNIENIAE (157 aa). Residue Asn225 coordinates K(+). Residues 225-230, 244-250, and 269-272 each bind GTP; these read NVGKSS, SNIAGTT, and DTAG. Ser229 is a Mg(2+) binding site. Ser244, Ile246, and Thr249 together coordinate K(+). Residue Thr250 participates in Mg(2+) binding. Lys445 is a (6S)-5-formyl-5,6,7,8-tetrahydrofolate binding site.

This sequence belongs to the TRAFAC class TrmE-Era-EngA-EngB-Septin-like GTPase superfamily. TrmE GTPase family. In terms of assembly, homodimer. Heterotetramer of two MnmE and two MnmG subunits. K(+) serves as cofactor.

The protein resides in the cytoplasm. Functionally, exhibits a very high intrinsic GTPase hydrolysis rate. Involved in the addition of a carboxymethylaminomethyl (cmnm) group at the wobble position (U34) of certain tRNAs, forming tRNA-cmnm(5)s(2)U34. In Rickettsia conorii (strain ATCC VR-613 / Malish 7), this protein is tRNA modification GTPase MnmE.